The chain runs to 224 residues: MKKLLAAGIIGLLTVSIASPSFAAEKQADTNVAVLFDGSGSMVQKTGGERKIDIAKKSVKSFAELLPKDTNLMLRVFGHAGNNKLSGKALSCSTTETIYGLHPYEGSLFDNSLSELKPTGWTPIAKALADTRKEFEAFDADGKNVVYLITDGEETCGGDPAAEIEKLRASNVDTIVNIIGFNFDVKGNEEMKQAAVAGGGEYISANSADEFEQAWEKEAQKFTE.

The signal sequence occupies residues 1 to 23; sequence MKKLLAAGIIGLLTVSIASPSFA. The region spanning 31-224 is the VWFA domain; sequence NVAVLFDGSG…WEKEAQKFTE (194 aa).

This sequence to B.subtilis YwmC.

This is an uncharacterized protein from Bacillus subtilis (strain 168).